Consider the following 286-residue polypeptide: Aminoglycoside N(3)-acetyltransferase III (286 aa).

The protein belongs to the antibiotic N-acetyltransferase family.

It catalyses the reaction a 2-deoxystreptamine antibiotic + acetyl-CoA = an N(3)-acetyl-2-deoxystreptamine antibiotic + CoA + H(+). Its function is as follows. Resistance to antibiotics containing the 2-deoxy-streptamine ring including gentamicin, kanamycin, tobramycin, neomycin and apramycin. The chain is Aminoglycoside N(3)-acetyltransferase III (aacC3) from Salmonella sp.